Consider the following 373-residue polypeptide: Chorismate synthase (373 aa).

R48 and R54 together coordinate NADP(+). FMN-binding positions include 131–133 (RSS), 243–244 (NA), G288, 303–307 (KPTSS), and R329.

The protein belongs to the chorismate synthase family. As to quaternary structure, homotetramer. Requires FMNH2 as cofactor.

It carries out the reaction 5-O-(1-carboxyvinyl)-3-phosphoshikimate = chorismate + phosphate. It participates in metabolic intermediate biosynthesis; chorismate biosynthesis; chorismate from D-erythrose 4-phosphate and phosphoenolpyruvate: step 7/7. Functionally, catalyzes the anti-1,4-elimination of the C-3 phosphate and the C-6 proR hydrogen from 5-enolpyruvylshikimate-3-phosphate (EPSP) to yield chorismate, which is the branch point compound that serves as the starting substrate for the three terminal pathways of aromatic amino acid biosynthesis. This reaction introduces a second double bond into the aromatic ring system. This is Chorismate synthase from Beijerinckia indica subsp. indica (strain ATCC 9039 / DSM 1715 / NCIMB 8712).